The chain runs to 343 residues: Multidrug resistance protein MdtN (343 aa).

The Cytoplasmic portion of the chain corresponds to 1–12 (MESTPKKAPRSK). The helical; Signal-anchor for type II membrane protein transmembrane segment at 13–33 (FPALLVVALALVALVFVIWRV) threads the bilayer. The Periplasmic segment spans residues 34–343 (DSAPSTNDAY…ASAVANLEPQ (310 aa)).

It belongs to the membrane fusion protein (MFP) (TC 8.A.1) family. Could be part of a tripartite efflux system composed of MdtN, MdtO and MdtP.

It localises to the cell inner membrane. Could be involved in resistance to puromycin, acriflavine and tetraphenylarsonium chloride. The protein is Multidrug resistance protein MdtN (mdtN) of Escherichia coli O157:H7.